A 249-amino-acid chain; its full sequence is Small ribosomal subunit protein uS2 (249 aa).

This sequence belongs to the universal ribosomal protein uS2 family.

In Listeria innocua serovar 6a (strain ATCC BAA-680 / CLIP 11262), this protein is Small ribosomal subunit protein uS2.